A 406-amino-acid chain; its full sequence is MNQEFLIQLGERACKNAENLTLPAELEGIFFCAPSSRESLATQVFVAIAFVLLMATAIIGNSVVMWIIYQHKVMHYGFNYFLFNMAFADLLIALFNVGTSWTYNLYYDWWYGDLCTLTSFFGIAPTTVSVCSMMALSWDRCQAVVNPLQKRPLSRKRSVIAILIIWVVSTVTALPFAIAASVNSLYTYDVVTSTVSKAHVCSAPVNTFFEKVLFGIQYALPIIILGSTFTRIAVAFRATNEATDSSLKNNHTRAKSKAVKMLFLMVVAFVVCWLPYHIYHAFALEEFFDAARGKYAYLLIYWIAMSSCAYNPIIYCFANERFRIGFRYVFRWIPVIDCKKEQYEYSQLFPDKMRSMAISLQKGRVNSSCLDKKVKENSSQDLVCVMHSEKNTKKYSKVHLLSCHER.

Residues 1 to 47 lie on the Extracellular side of the membrane; sequence MNQEFLIQLGERACKNAENLTLPAELEGIFFCAPSSRESLATQVFVA. A helical membrane pass occupies residues 48 to 68; sequence IAFVLLMATAIIGNSVVMWII. At 69–76 the chain is on the cytoplasmic side; it reads YQHKVMHY. A helical transmembrane segment spans residues 77–97; that stretch reads GFNYFLFNMAFADLLIALFNV. Topologically, residues 98-115 are extracellular; the sequence is GTSWTYNLYYDWWYGDLC. Residues 116–136 form a helical membrane-spanning segment; sequence TLTSFFGIAPTTVSVCSMMAL. Topologically, residues 137-158 are cytoplasmic; the sequence is SWDRCQAVVNPLQKRPLSRKRS. The chain crosses the membrane as a helical span at residues 159–179; sequence VIAILIIWVVSTVTALPFAIA. Over 180 to 204 the chain is Extracellular; the sequence is ASVNSLYTYDVVTSTVSKAHVCSAP. A helical membrane pass occupies residues 205–225; that stretch reads VNTFFEKVLFGIQYALPIIIL. The Cytoplasmic portion of the chain corresponds to 226–261; sequence GSTFTRIAVAFRATNEATDSSLKNNHTRAKSKAVKM. A helical transmembrane segment spans residues 262 to 282; that stretch reads LFLMVVAFVVCWLPYHIYHAF. Residues 283 to 297 lie on the Extracellular side of the membrane; that stretch reads ALEEFFDAARGKYAY. The helical transmembrane segment at 298–318 threads the bilayer; that stretch reads LLIYWIAMSSCAYNPIIYCFA. At 319–406 the chain is on the cytoplasmic side; sequence NERFRIGFRY…KVHLLSCHER (88 aa).

The protein belongs to the G-protein coupled receptor 1 family.

Its subcellular location is the cell membrane. In terms of biological role, not known. Putative receptor. This chain is Probable G-protein coupled receptor tkr-1 (tkr-1), found in Caenorhabditis elegans.